We begin with the raw amino-acid sequence, 552 residues long: Threonylcarbamoyladenosine tRNA methylthiotransferase (552 aa).

The segment at 31–61 (YENKKTVTVRAKKRSQIRLESQEEEEKPKPT) is disordered. Residues 71–178 (QKVFVKTWGC…VVEVVEETLK (108 aa)) form the MTTase N-terminal domain. C80, C115, C144, C221, C225, and C228 together coordinate [4Fe-4S] cluster. Residues 207–438 (RKNPLIEIIS…DLFYSYEPYA (232 aa)) enclose the Radical SAM core domain. Positions 438-500 (ADRVGEIYTV…KFSMVGEILD (63 aa)) constitute a TRAM domain. The chain crosses the membrane as a helical span at residues 532–552 (FGIALVLGSLAFLIQLVVRLL).

Belongs to the methylthiotransferase family. CDKAL1 subfamily. It depends on [4Fe-4S] cluster as a cofactor.

It localises to the membrane. The catalysed reaction is N(6)-L-threonylcarbamoyladenosine(37) in tRNA + (sulfur carrier)-SH + AH2 + 2 S-adenosyl-L-methionine = 2-methylsulfanyl-N(6)-L-threonylcarbamoyladenosine(37) in tRNA + (sulfur carrier)-H + 5'-deoxyadenosine + L-methionine + A + S-adenosyl-L-homocysteine + 2 H(+). In terms of biological role, catalyzes the methylthiolation of N6-threonylcarbamoyladenosine (t(6)A), leading to the formation of 2-methylthio-N6-threonylcarbamoyladenosine (ms(2)t(6)A) at position 37 in tRNAs that read codons beginning with adenine. The protein is Threonylcarbamoyladenosine tRNA methylthiotransferase of Drosophila melanogaster (Fruit fly).